We begin with the raw amino-acid sequence, 217 residues long: MTRGRFITLEGLEGAGKSTALTRVREYLQRQGIDAVMTREPGGTPLGERIRALLLGQSEPPMAPATEALLMFAARSEHLDKRIWPALERGQWVVCDRFTDASYAYQGWGRGLGAERIAALEDWTQGALRPDLTLWLDVPVETGLARAAGRGEAPDRFEQERDGFFERVHEGYAALAERFPERIRRVDAGQPLEAVLTALEEALASAVTRWLSGTEAH.

11–18 is an ATP binding site; sequence GLEGAGKS.

Belongs to the thymidylate kinase family.

It catalyses the reaction dTMP + ATP = dTDP + ADP. Its function is as follows. Phosphorylation of dTMP to form dTDP in both de novo and salvage pathways of dTTP synthesis. The sequence is that of Thymidylate kinase from Alkalilimnicola ehrlichii (strain ATCC BAA-1101 / DSM 17681 / MLHE-1).